Consider the following 41-residue polypeptide: Large ribosomal subunit protein bL36 (41 aa).

Belongs to the bacterial ribosomal protein bL36 family.

This chain is Large ribosomal subunit protein bL36, found in Bartonella quintana (strain Toulouse) (Rochalimaea quintana).